The primary structure comprises 420 residues: Gamma-glutamyl phosphate reductase (420 aa).

Belongs to the gamma-glutamyl phosphate reductase family.

The protein localises to the cytoplasm. It catalyses the reaction L-glutamate 5-semialdehyde + phosphate + NADP(+) = L-glutamyl 5-phosphate + NADPH + H(+). It participates in amino-acid biosynthesis; L-proline biosynthesis; L-glutamate 5-semialdehyde from L-glutamate: step 2/2. In terms of biological role, catalyzes the NADPH-dependent reduction of L-glutamate 5-phosphate into L-glutamate 5-semialdehyde and phosphate. The product spontaneously undergoes cyclization to form 1-pyrroline-5-carboxylate. In Streptococcus pneumoniae (strain ATCC 700669 / Spain 23F-1), this protein is Gamma-glutamyl phosphate reductase.